A 439-amino-acid polypeptide reads, in one-letter code: MPLNVSFANRNYDLDYDSVQPYFYCDEEENFYQQQQQSELQPPAPSEDIWKKFELLPTPPLSPSRRSGLCSPSYVAFASFSPRGDDDGGGGSFSTADQLEMVTELLGGDMVNQSFICDPDDETFIKNIIIQDCMWSGFSAAAKLVSEKLASYQAARKDSGSPSPARGPGGCPTSSLYLQDLTAAASECIDPSVVFPYPLNDSSSPKPCASPDSAAFSPSSDSLLSSAESSPRASPEPLALHEETPPTTSSDSEEEQEEEEEIDVVSVEKRQPPAKRSESGSPSAGGHSKPPHSPLVLKRCHVPTHQHNYAAPPSTRKDYPAAKRAKLDSGRVLKQISNNRKCISPRSSDTEENDKRRTHNVLERQRRNELKRSFFALRDQIPELENNEKAPKVVILKKATAYILSVQAGEQKLISEKDLLRKRREQLKHKLEQLRNSCA.

S6 is modified (phosphoserine). Residue K52 forms a Glycyl lysine isopeptide (Lys-Gly) (interchain with G-Cter in SUMO2) linkage. T58 bears the Phosphothreonine; by GSK3; alternate mark. O-linked (GlcNAc) threonine; alternate glycosylation is present at T58. Position 62 is a phosphoserine; by DYRK2, GSK3 and CDK2 (S62). 2 positions are modified to phosphoserine: S71 and S81. Positions 100 to 108 (EMVTELLGG) match the 9aaTAD motif. An N6-acetyllysine; by PCAF; alternate modification is found at K143. Glycyl lysine isopeptide (Lys-Gly) (interchain with G-Cter in SUMO2); alternate cross-links involve residues K143 and K148. K148 bears the N6-acetyllysine; alternate mark. S151 bears the Phosphoserine mark. K157 is modified (N6-acetyllysine; by PCAF). Residues S159 and S161 each carry the phosphoserine modification. A disordered region spans residues 201–296 (DSSSPKPCAS…HSKPPHSPLV (96 aa)). Positions 207–238 (PCASPDSAAFSPSSDSLLSSAESSPRASPEPL) are enriched in low complexity. Acidic residues predominate over residues 251-263 (DSEEEQEEEEEID). The span at 266-278 (SVEKRQPPAKRSE) shows a compositional bias: basic and acidic residues. The residue at position 275 (K275) is an N6-acetyllysine; by PCAF. S293 is modified (phosphoserine). A Glycyl lysine isopeptide (Lys-Gly) (interchain with G-Cter in SUMO2) cross-link involves residue K298. S314 carries the post-translational modification Phosphoserine. T315 is subject to Phosphothreonine. An N6-acetyllysine; by PCAF mark is found at K317 and K323. S329 is modified (phosphoserine; by PIM2; in vitro). Phosphoserine is present on residues S344, S347, and S348. The region spanning 354 to 406 (DKRRTHNVLERQRRNELKRSFFALRDQIPELENNEKAPKVVILKKATAYILSV) is the bHLH domain. Positions 355–364 (KRRTHNVLER) match the UBR5-degron motif. K371 carries the post-translational modification N6-acetyllysine; by PCAF. The interval 413–434 (LISEKDLLRKRREQLKHKLEQL) is leucine-zipper.

Efficient DNA binding requires dimerization with another bHLH protein. Binds DNA as a heterodimer with MAX. Interacts with TAF1C and SPAG9. Interacts with PARP10. Interacts with KDM5A and KDM5B. Interacts (when phosphorylated at Thr-58 and Ser-62) with FBXW7. Interacts with PIM2. Interacts with RIOX1. The heterodimer MYC:MAX interacts with ABI1; the interaction may enhance MYC:MAX transcriptional activity. Interacts with TRIM6. Interacts with NPM1; the binary complex is recruited to the promoter of MYC target genes and enhances their transcription. Interacts with CIP2A; leading to the stabilization of MYC. Interacts with NUP205. Interacts with HEATR1; the interaction is required for localization of MYC to the nucleolus. In terms of processing, phosphorylated by PRKDC. Phosphorylation at Ser-329 by PIM2 leads to the stabilization of MYC. Phosphorylation at Ser-62 by CDK2 prevents Ras-induced senescence. Phosphorylated at Ser-62 by DYRK2; this primes the protein for subsequent phosphorylation by GSK3B at Thr-58. Phosphorylation at Thr-58 and Ser-62 by GSK3 is required for ubiquitination and degradation by the proteasome. Dephosphorylation at multiple sites by the PNUTS-PP1 complex promotes MYC stability by preventing ubiquitination by the SCF(FBXW7) complex. Dephosphorylation at Ser-62 by protein phosphatase 2A (PPP2CA) promotes its degradation; interaction with PPP2CA is enhanced by AMBRA1. Post-translationally, ubiquitinated by the SCF(FBXW7) complex when phosphorylated at Thr-58 and Ser-62, leading to its degradation by the proteasome. Ubiquitination is counteracted by USP28 in the nucleoplasm and USP36 in the nucleolus, both interacting with of FBXW7, leading to its deubiquitination and preventing degradation. Also polyubiquitinated by the DCX(TRPC4AP) complex. Ubiquitinated by UBR5 when not forming a heterodimer with another bHLH protein, leading to its degradation: UBR5 recognizes and binds a degron that is only available upon heterodimer dissociation. Ubiquitinated by TRIM6 in a phosphorylation-independent manner.

Its subcellular location is the nucleus. The protein resides in the nucleoplasm. The protein localises to the nucleolus. It is found in the cytoplasm. It localises to the chromosome. Transcription factor that binds DNA in a non-specific manner, yet also specifically recognizes the core sequence 5'-CAC[GA]TG-3'. Activates the transcription of growth-related genes. Binds to the VEGFA promoter, promoting VEGFA production and subsequent sprouting angiogenesis. Regulator of somatic reprogramming, controls self-renewal of embryonic stem cells. Functions with TAF6L to activate target gene expression through RNA polymerase II pause release. Positively regulates transcription of HNRNPA1, HNRNPA2 and PTBP1 which in turn regulate splicing of pyruvate kinase PKM by binding repressively to sequences flanking PKM exon 9, inhibiting exon 9 inclusion and resulting in exon 10 inclusion and production of the PKM M2 isoform. The sequence is that of Myc proto-oncogene protein (MYC) from Felis catus (Cat).